We begin with the raw amino-acid sequence, 679 residues long: SAGMIIMLIPTVMAFHLTTRNGEPHMIVSRQEKGKSLLFKTEDGVNMCTLMAMDLGELCEDTITYKCPLLRQNEPEDIDCWCNSTSTWVTYGTCTTTGEHRREKRSVALVPHVGMGLETRTETWMSSEGAWKHAQRIEIWILRHPGFTIMAAILAYTIGTTHFQRALIFILLTAVAPSMTMRCIGISNRDFVEGVSGGSWVDIVLEHGSCVTTMAKNKPTLDFELIKTEAKQPATLRKYCIEAKLTNTTTESRCPTQGEPSLNEEQDKRFVCKHSMVDRGWGNGCGLFGKGGIVTCAMFTCKKNMEGKVVQPENLEYTIVVTPHSGEEHAVGNDTGKHGKEIKVTPQSSITEAELTGYGTVTMECSPRTGLDFNEMVLLQMENKAWLVHRQWFLDLPLPWLPGADTQGSNWIQKETLVTFKNPHAKKQDVVVLGSQEGAMHTALTGATEIQMSSGNLLFTGHLKCRLRMDKLQLKGMSYSMCTGKFKVVKEIAETQHGTIVIRVQYEGDGSPCKIPFEIMDLEKRHVLGRLITVNPIVTEKDSPVNIEAEPPFGDSYIIIGVEPGQLKLNWFKKGSSIGQMFETTMRGAKRMAILGDTAWDFGSLGGVFTSIGKALHQVFGAIYGAAFSGVSWTMKILIGVIITWIGMNSRSTSLSVSLVLVGIVTLYLGVMVQADSGC.

Positions 1 to 14 are cleaved as a propeptide — ER anchor for the capsid protein C, removed in mature form by serine protease NS3; sequence SAGMIIMLIPTVMA. Residues 2 to 22 traverse the membrane as a helical segment; that stretch reads AGMIIMLIPTVMAFHLTTRNG. Residues 23 to 138 are Extracellular-facing; it reads EPHMIVSRQE…GAWKHAQRIE (116 aa). Asparagine 83 carries N-linked (GlcNAc...) asparagine; by host glycosylation. A helical transmembrane segment spans residues 139–159; that stretch reads IWILRHPGFTIMAAILAYTIG. Topologically, residues 160 to 165 are cytoplasmic; the sequence is TTHFQR. Residues 166–180 traverse the membrane as a helical segment; the sequence is ALIFILLTAVAPSMT. Residues 181–625 are Extracellular-facing; sequence MRCIGISNRD…LHQVFGAIYG (445 aa). Disulfide bonds link cysteine 183–cysteine 210, cysteine 240–cysteine 301, cysteine 254–cysteine 285, and cysteine 272–cysteine 296. A glycan (N-linked (GlcNAc...) asparagine; by host) is linked at asparagine 247. Residues 278–291 are fusion peptide; the sequence is DRGWGNGCGLFGKG. An N-linked (GlcNAc...) asparagine; by host glycan is attached at asparagine 333. 2 disulfide bridges follow: cysteine 365–cysteine 465 and cysteine 482–cysteine 513. Residues 626-646 form a helical membrane-spanning segment; that stretch reads AAFSGVSWTMKILIGVIITWI. Residues 647–652 are Cytoplasmic-facing; that stretch reads GMNSRS. A helical membrane pass occupies residues 653–673; it reads TSLSVSLVLVGIVTLYLGVMV. Residues 674–679 lie on the Extracellular side of the membrane; that stretch reads QADSGC.

As to quaternary structure, forms heterodimers with envelope protein E in the endoplasmic reticulum and Golgi. Homodimer; in the endoplasmic reticulum and Golgi. Interacts with protein prM. Interacts with non-structural protein 1. Post-translationally, cleaved in post-Golgi vesicles by a host furin, releasing the mature small envelope protein M, and peptide pr. This cleavage is incomplete as up to 30% of viral particles still carry uncleaved prM. N-glycosylated. In terms of processing, N-glycosylated. The excreted form is glycosylated and this is required for efficient secretion of the protein from infected cells. Post-translationally, specific enzymatic cleavages in vivo yield mature proteins. Cleavages in the lumen of endoplasmic reticulum are performed by host signal peptidase, wereas cleavages in the cytoplasmic side are performed by serine protease NS3. Signal cleavage at the 2K-4B site requires a prior NS3 protease-mediated cleavage at the 4A-2K site.

It localises to the secreted. The protein resides in the virion membrane. Its subcellular location is the host endoplasmic reticulum membrane. In terms of biological role, prevents premature fusion activity of envelope proteins in trans-Golgi by binding to envelope protein E at pH6.0. After virion release in extracellular space, gets dissociated from E dimers. Its function is as follows. Acts as a chaperone for envelope protein E during intracellular virion assembly by masking and inactivating envelope protein E fusion peptide. prM is the only viral peptide matured by host furin in the trans-Golgi network probably to avoid catastrophic activation of the viral fusion activity in acidic Golgi compartment prior to virion release. prM-E cleavage is inefficient, and many virions are only partially matured. These uncleaved prM would play a role in immune evasion. May play a role in virus budding. Exerts cytotoxic effects by activating a mitochondrial apoptotic pathway through M ectodomain. May display a viroporin activity. Functionally, binds to host cell surface receptor and mediates fusion between viral and cellular membranes. Envelope protein is synthesized in the endoplasmic reticulum in the form of heterodimer with protein prM. They play a role in virion budding in the ER, and the newly formed immature particle is covered with 60 spikes composed of heterodimer between precursor prM and envelope protein E. The virion is transported to the Golgi apparatus where the low pH causes dissociation of PrM-E heterodimers and formation of E homodimers. prM-E cleavage is inefficient, and many virions are only partially matured. These uncleaved prM would play a role in immune evasion. In terms of biological role, involved in immune evasion, pathogenesis and viral replication. Once cleaved off the polyprotein, is targeted to three destinations: the viral replication cycle, the plasma membrane and the extracellular compartment. Essential for viral replication. Required for formation of the replication complex and recruitment of other non-structural proteins to the ER-derived membrane structures. Excreted as a hexameric lipoparticle that plays a role against host immune response. Antagonizing the complement function. Binds to the host macrophages and dendritic cells. Inhibits signal transduction originating from Toll-like receptor 3 (TLR3). Its function is as follows. Disrupts the host endothelial glycocalyx layer of host pulmonary microvascular endothelial cells, inducing degradation of sialic acid and shedding of heparan sulfate proteoglycans. NS1 induces expression of sialidases, heparanase, and activates cathepsin L, which activates heparanase via enzymatic cleavage. These effects are probably linked to the endothelial hyperpermeability observed in severe dengue disease. The polypeptide is Genome polyprotein (Dengue virus type 2 (strain Thailand/PUO-218/1980) (DENV-2)).